Consider the following 574-residue polypeptide: (R)-mandelonitrile lyase 4 (574 aa).

A signal peptide spans 1–27 (MEKSTMSAVVLVLNLLVLHLQYSEVHS). N-linked (GlcNAc...) asparagine glycosylation occurs at Asn30. 64–65 (TS) serves as a coordination point for FAD. The N-linked (GlcNAc...) asparagine glycan is linked to Asn76. FAD is bound by residues 83-84 (ER), Thr134, and 138-141 (NAGV). 3 N-linked (GlcNAc...) asparagine glycosylation sites follow: Asn146, Asn151, and Asn179. Val245 contacts FAD. Residues Asn268 and Asn310 are each glycosylated (N-linked (GlcNAc...) asparagine). Cys357 is a binding site for substrate. 3 N-linked (GlcNAc...) asparagine glycosylation sites follow: Asn381, Asn407, and Asn468. Cys428 and Cys479 are joined by a disulfide. Tyr486 is a binding site for substrate. FAD-binding positions include 487–488 (WH) and Gly516. The active-site Proton donor is the His488. Catalysis depends on His526, which acts as the Proton acceptor. Residue 527–528 (PQ) coordinates FAD.

This sequence belongs to the GMC oxidoreductase family. In terms of assembly, monomer. Requires FAD as cofactor.

It is found in the vacuole. It localises to the aleurone grain. It carries out the reaction (R)-mandelonitrile = benzaldehyde + hydrogen cyanide. Functionally, involved in cyanogenesis, the release of HCN from injured tissues. Catalyzes the stereospecific addition of HCN to a variety of aldehydes in vitro. It is a major seed constituent, and could have the additional role of a storage form for reduced nitrogen. The chain is (R)-mandelonitrile lyase 4 (MDL4) from Prunus serotina (Black cherry).